Here is a 310-residue protein sequence, read N- to C-terminus: AA9 family lytic polysaccharide monooxygenase A (310 aa).

A signal peptide spans 1–21 (MPSTKVAALSAVLALASTVAG). The Cu(2+) site is built by His-22 and His-107. Cystine bridges form between Cys-77-Cys-199 and Cys-118-Cys-122. 2 N-linked (GlcNAc...) asparagine glycosylation sites follow: Asn-121 and Asn-159. Position 185 (His-185) interacts with O2. Tyr-196 is a binding site for Cu(2+).

Belongs to the polysaccharide monooxygenase AA9 family. The cofactor is Cu(2+).

Its subcellular location is the secreted. The catalysed reaction is [(1-&gt;4)-beta-D-glucosyl]n+m + reduced acceptor + O2 = 4-dehydro-beta-D-glucosyl-[(1-&gt;4)-beta-D-glucosyl]n-1 + [(1-&gt;4)-beta-D-glucosyl]m + acceptor + H2O.. Functionally, lytic polysaccharide monooxygenase (LPMO) that depolymerizes crystalline and amorphous polysaccharides via the oxidation of scissile alpha- or beta-(1-4)-glycosidic bonds, yielding C1, C4 as well as C6 oxidation products. Catalysis by LPMOs requires the reduction of the active-site copper from Cu(II) to Cu(I) by a reducing agent and H(2)O(2) or O(2) as a cosubstrate. Active on cellulose, but not on xylan, starch, or chitin. The protein is AA9 family lytic polysaccharide monooxygenase A of Talaromyces pinophilus (Penicillium pinophilum).